A 527-amino-acid polypeptide reads, in one-letter code: Heat shock factor protein HSF8 (527 aa).

The segment covering 1 to 13 (MEPNSSGSGKAAV) has biased composition (low complexity). Disordered stretches follow at residues 1–37 (MEPNSSGSGKAAVGDGGGGGAPMLQPAPAPAPMPSAN), 130–160 (RRKPAHGHAQQQQQPHGHAQQQMQPPGHSAS), 243–275 (NESNKRIAEGSKKRRIKQDIESQDPSVTPADGQ), 300–343 (SPRL…TSGK), and 476–501 (QSPSSPDAAMDDDISNTSETKPQING). Over residues 25-37 (QPAPAPAPMPSAN) the composition is skewed to pro residues. The DNA-binding element occupies 39-133 (PPPFLVKTYD…LLKSISRRKP (95 aa)). A compositionally biased stretch (low complexity) spans 136 to 157 (GHAQQQQQPHGHAQQQMQPPGH). Composition is skewed to polar residues over residues 319–328 (SPQSNASSGR) and 491–501 (NTSETKPQING).

It belongs to the HSF family. As to quaternary structure, homotrimer. Exhibits temperature-dependent phosphorylation.

It localises to the nucleus. DNA-binding protein that specifically binds heat shock promoter elements (HSE) and activates transcription. The sequence is that of Heat shock factor protein HSF8 (HSF8) from Solanum peruvianum (Peruvian tomato).